The primary structure comprises 337 residues: Tetraacyldisaccharide 4'-kinase (337 aa).

55–62 (TIGGNGKT) provides a ligand contact to ATP.

This sequence belongs to the LpxK family.

The enzyme catalyses a lipid A disaccharide + ATP = a lipid IVA + ADP + H(+). Its pathway is glycolipid biosynthesis; lipid IV(A) biosynthesis; lipid IV(A) from (3R)-3-hydroxytetradecanoyl-[acyl-carrier-protein] and UDP-N-acetyl-alpha-D-glucosamine: step 6/6. In terms of biological role, transfers the gamma-phosphate of ATP to the 4'-position of a tetraacyldisaccharide 1-phosphate intermediate (termed DS-1-P) to form tetraacyldisaccharide 1,4'-bis-phosphate (lipid IVA). The chain is Tetraacyldisaccharide 4'-kinase from Blochmanniella pennsylvanica (strain BPEN).